The following is a 397-amino-acid chain: Acetate kinase (397 aa).

N7 is a binding site for Mg(2+). Position 14 (K14) interacts with ATP. Residue R91 participates in substrate binding. Catalysis depends on D148, which acts as the Proton donor/acceptor. ATP-binding positions include 208 to 212, 283 to 285, and 331 to 335; these read HLGNG, DFR, and GLGEN. E383 contributes to the Mg(2+) binding site.

Belongs to the acetokinase family. As to quaternary structure, homodimer. It depends on Mg(2+) as a cofactor. Requires Mn(2+) as cofactor.

The protein localises to the cytoplasm. It carries out the reaction acetate + ATP = acetyl phosphate + ADP. Its pathway is metabolic intermediate biosynthesis; acetyl-CoA biosynthesis; acetyl-CoA from acetate: step 1/2. Functionally, catalyzes the formation of acetyl phosphate from acetate and ATP. Can also catalyze the reverse reaction. This is Acetate kinase from Heliobacterium modesticaldum (strain ATCC 51547 / Ice1).